Here is a 214-residue protein sequence, read N- to C-terminus: 3-isopropylmalate dehydratase small subunit (214 aa).

The protein belongs to the LeuD family. LeuD type 1 subfamily. Heterodimer of LeuC and LeuD.

It carries out the reaction (2R,3S)-3-isopropylmalate = (2S)-2-isopropylmalate. It participates in amino-acid biosynthesis; L-leucine biosynthesis; L-leucine from 3-methyl-2-oxobutanoate: step 2/4. Its function is as follows. Catalyzes the isomerization between 2-isopropylmalate and 3-isopropylmalate, via the formation of 2-isopropylmaleate. This is 3-isopropylmalate dehydratase small subunit from Nitrosococcus oceani (strain ATCC 19707 / BCRC 17464 / JCM 30415 / NCIMB 11848 / C-107).